A 201-amino-acid polypeptide reads, in one-letter code: Small ribosomal subunit protein uS4 (201 aa).

The disordered stretch occupies residues 26 to 47; sequence LSKKNYPPGQHGNNRRRKTSEY. An S4 RNA-binding domain is found at 92-154; that stretch reads ARLDNVVFRL…SKSLEVIADA (63 aa).

Belongs to the universal ribosomal protein uS4 family. In terms of assembly, part of the 30S ribosomal subunit. Contacts protein S5. The interaction surface between S4 and S5 is involved in control of translational fidelity.

Its function is as follows. One of the primary rRNA binding proteins, it binds directly to 16S rRNA where it nucleates assembly of the body of the 30S subunit. In terms of biological role, with S5 and S12 plays an important role in translational accuracy. The chain is Small ribosomal subunit protein uS4 from Porphyromonas gingivalis (strain ATCC 33277 / DSM 20709 / CIP 103683 / JCM 12257 / NCTC 11834 / 2561).